The chain runs to 704 residues: Acetyl-coenzyme A synthetase 1 (704 aa).

CoA-binding positions include 239–242 and Thr-358; that span reads RGGK. ATP contacts are provided by residues 434–436, 458–463, Asp-550, and Arg-565; these read GEP and DTYWQT. Ser-573 is a binding site for CoA. ATP is bound at residue Arg-576. Arg-641 contributes to the CoA binding site. The Microbody targeting signal signature appears at 702-704; that stretch reads VKL.

The protein belongs to the ATP-dependent AMP-binding enzyme family.

Its subcellular location is the microsome. The protein resides in the endoplasmic reticulum. It carries out the reaction acetate + ATP + CoA = acetyl-CoA + AMP + diphosphate. The polypeptide is Acetyl-coenzyme A synthetase 1 (ACS1) (Candida glabrata (strain ATCC 2001 / BCRC 20586 / JCM 3761 / NBRC 0622 / NRRL Y-65 / CBS 138) (Yeast)).